Reading from the N-terminus, the 651-residue chain is Probable replication restart protein PriA (651 aa).

Zn(2+)-binding residues include cysteine 371, cysteine 374, cysteine 380, cysteine 383, cysteine 399, cysteine 402, cysteine 411, and cysteine 414.

It belongs to the helicase family. PriA subfamily. As to quaternary structure, component of the replication restart primosome. It depends on Zn(2+) as a cofactor.

In terms of biological role, initiates the restart of stalled replication forks, which reloads the replicative helicase on sites other than the origin of replication. Recognizes and binds to abandoned replication forks and remodels them to uncover a helicase loading site. Promotes assembly of the primosome at these replication forks. This Mycobacterium leprae (strain TN) protein is Probable replication restart protein PriA.